Here is a 122-residue protein sequence, read N- to C-terminus: UPF0344 protein BcerKBAB4_1054 (122 aa).

The next 4 membrane-spanning stretches (helical) occupy residues 6 to 26, 38 to 58, 65 to 85, and 92 to 112; these read ITAW…YSAG, LMYI…VKTA, WYGM…MVLV, and PTGA…YLGL.

Belongs to the UPF0344 family.

It is found in the cell membrane. This is UPF0344 protein BcerKBAB4_1054 from Bacillus mycoides (strain KBAB4) (Bacillus weihenstephanensis).